We begin with the raw amino-acid sequence, 296 residues long: NADH-cytochrome b5 reductase 2 (296 aa).

Residues 12-29 (LPIALGVGAASIATAIIL) traverse the membrane as a helical segment. One can recognise an FAD-binding FR-type domain in the interval 47-151 (NEWIDLPIIK…KGPITKWEWK (105 aa)). 154-189 (SYDSITLLGAGTGINPLYQLVHHIAENPEDNTKIHL) is an FAD binding site.

Belongs to the flavoprotein pyridine nucleotide cytochrome reductase family. Requires FAD as cofactor.

It is found in the mitochondrion outer membrane. The catalysed reaction is 2 Fe(III)-[cytochrome b5] + NADH = 2 Fe(II)-[cytochrome b5] + NAD(+) + H(+). May mediate the reduction of outer membrane cytochrome b5. The polypeptide is NADH-cytochrome b5 reductase 2 (MCR1) (Kluyveromyces lactis (strain ATCC 8585 / CBS 2359 / DSM 70799 / NBRC 1267 / NRRL Y-1140 / WM37) (Yeast)).